Reading from the N-terminus, the 273-residue chain is MNNRVHQGHLARKRFGQNFLNDQFVIDSIVSAINPQKGQAMVEIGPGLAALTEPVGERLDQLTVIELDRDLAARLQTHPFLGPKLTIYQQDAMTMNFGELAEKMGQPLRVFGNLPYNISTPLMFHLFSYTDAIADMHFMLQKEVVNRLVAGPNSKAYGRLSVMAQYYCQVIPVLEVPPSAFTPPPKVDSAVVRLVPHSTMPYPVKEIRVLSRITTEAFNQRRKTIRNSLGNLFSVEVLTELGIDPAMRAENISVAQYCLMANWLSDNLPTKES.

S-adenosyl-L-methionine-binding residues include asparagine 18, leucine 20, glycine 45, glutamate 66, aspartate 91, and asparagine 113.

It belongs to the class I-like SAM-binding methyltransferase superfamily. rRNA adenine N(6)-methyltransferase family. RsmA subfamily.

The protein localises to the cytoplasm. The enzyme catalyses adenosine(1518)/adenosine(1519) in 16S rRNA + 4 S-adenosyl-L-methionine = N(6)-dimethyladenosine(1518)/N(6)-dimethyladenosine(1519) in 16S rRNA + 4 S-adenosyl-L-homocysteine + 4 H(+). In terms of biological role, specifically dimethylates two adjacent adenosines (A1518 and A1519) in the loop of a conserved hairpin near the 3'-end of 16S rRNA in the 30S particle. May play a critical role in biogenesis of 30S subunits. In Klebsiella pneumoniae subsp. pneumoniae (strain ATCC 700721 / MGH 78578), this protein is Ribosomal RNA small subunit methyltransferase A.